Reading from the N-terminus, the 173-residue chain is Co-chaperone protein HscB homolog (173 aa).

One can recognise a J domain in the interval 5 to 77 (CHFALFELKP…PKRARYLLAM (73 aa)).

It belongs to the HscB family. Interacts with HscA and stimulates its ATPase activity.

In terms of biological role, co-chaperone involved in the maturation of iron-sulfur cluster-containing proteins. Seems to help targeting proteins to be folded toward HscA. In Pseudomonas syringae pv. tomato (strain ATCC BAA-871 / DC3000), this protein is Co-chaperone protein HscB homolog.